Here is a 1040-residue protein sequence, read N- to C-terminus: Multidrug resistance protein MdtB (1040 aa).

Helical transmembrane passes span 16–36 (FIMR…AGII), 347–367 (LMMA…NIPA), 369–389 (IIPG…MVFL), 396–416 (LTLM…IVVI), 440–460 (IGFT…PLLF), 472–492 (FAIT…TLTP), 537–557 (WLTL…WVFI), 863–883 (LGST…VLGI), 888–908 (FIHP…ALLA), 911–931 (IAGS…IGIV), 968–988 (ILMT…STGV), and 998–1018 (IGMV…TPVI).

It belongs to the resistance-nodulation-cell division (RND) (TC 2.A.6) family. MdtB subfamily. Part of a tripartite efflux system composed of MdtA, MdtB and MdtC. MdtB forms a heteromultimer with MdtC.

The protein localises to the cell inner membrane. Functionally, the MdtABC tripartite complex confers resistance against novobiocin and deoxycholate. The chain is Multidrug resistance protein MdtB from Escherichia coli O81 (strain ED1a).